The primary structure comprises 389 residues: Migration and invasion-inhibitory protein (389 aa).

The span at Leu44–Glu54 shows a compositional bias: low complexity. Disordered stretches follow at residues Leu44 to Leu80 and Lys131 to Pro150. Over residues Ser58–Ser70 the composition is skewed to polar residues. The span at Gln71–Leu80 shows a compositional bias: basic and acidic residues. Ser309 bears the Phosphoserine mark.

Interacts with IGFBP2.

Functionally, inhibits glioma cells invasion and down-regulates adhesion- and motility-associated genes such as NFKB2 and ICAM1. Exhibits opposing effects to IGFBP2 on cell invasion. The polypeptide is Migration and invasion-inhibitory protein (Miip) (Rattus norvegicus (Rat)).